Reading from the N-terminus, the 220-residue chain is 7-carboxy-7-deazaguanine synthase (220 aa).

Substrate is bound by residues 16–18 (IQG) and arginine 31. Residues 22–215 (FAGWPCAFVR…LQLHKYIWNP (194 aa)) form the Radical SAM core domain. Cysteine 35, cysteine 39, and cysteine 42 together coordinate [4Fe-4S] cluster. Position 44 (threonine 44) interacts with Mg(2+). Threonine 74 is a binding site for substrate. Glycine 76 contacts S-adenosyl-L-methionine.

Belongs to the radical SAM superfamily. 7-carboxy-7-deazaguanine synthase family. As to quaternary structure, homodimer. [4Fe-4S] cluster serves as cofactor. The cofactor is S-adenosyl-L-methionine. It depends on Mg(2+) as a cofactor.

It carries out the reaction 6-carboxy-5,6,7,8-tetrahydropterin + H(+) = 7-carboxy-7-deazaguanine + NH4(+). It functions in the pathway purine metabolism; 7-cyano-7-deazaguanine biosynthesis. Its function is as follows. Catalyzes the complex heterocyclic radical-mediated conversion of 6-carboxy-5,6,7,8-tetrahydropterin (CPH4) to 7-carboxy-7-deazaguanine (CDG), a step common to the biosynthetic pathways of all 7-deazapurine-containing compounds. The sequence is that of 7-carboxy-7-deazaguanine synthase from Chlorobaculum tepidum (strain ATCC 49652 / DSM 12025 / NBRC 103806 / TLS) (Chlorobium tepidum).